The following is a 558-amino-acid chain: Vanin-like protein 1 (558 aa).

The signal sequence occupies residues 1–22 (MSNTWWWLSVVLLILGLMPGMS). The 267-residue stretch at 33 to 299 (YTAGVVEFKQ…RAIYVAQVPK (267 aa)) folds into the CN hydrolase domain. Residue asparagine 65 is glycosylated (N-linked (GlcNAc...) asparagine). The active-site Proton acceptor is glutamate 76. N-linked (GlcNAc...) asparagine glycosylation is found at asparagine 103, asparagine 120, and asparagine 128. The active-site Proton donor is lysine 171. The N-linked (GlcNAc...) asparagine glycan is linked to asparagine 180. The active-site Nucleophile is cysteine 203. Asparagine 354 and asparagine 379 each carry an N-linked (GlcNAc...) asparagine glycan. Serine 531 is lipidated: GPI-anchor amidated serine. The propeptide at 532-558 (GSPGLRILGGWLAMPLIILAIARTMSS) is removed in mature form.

Belongs to the carbon-nitrogen hydrolase superfamily. BTD/VNN family. Expressed in larvae and early pupae. Expressed in third instar larvae.

It is found in the cell membrane. The polypeptide is Vanin-like protein 1 (Drosophila melanogaster (Fruit fly)).